The chain runs to 689 residues: Elongation factor G 1 (689 aa).

Residues 7–282 enclose the tr-type G domain; sequence DQVRTIGIIS…AVVDFLPSPL (276 aa). GTP is bound by residues 16-23, 80-84, and 134-137; these read SHIDAGKT, DTPGH, and NKMD.

Belongs to the TRAFAC class translation factor GTPase superfamily. Classic translation factor GTPase family. EF-G/EF-2 subfamily.

Its subcellular location is the cytoplasm. Functionally, catalyzes the GTP-dependent ribosomal translocation step during translation elongation. During this step, the ribosome changes from the pre-translocational (PRE) to the post-translocational (POST) state as the newly formed A-site-bound peptidyl-tRNA and P-site-bound deacylated tRNA move to the P and E sites, respectively. Catalyzes the coordinated movement of the two tRNA molecules, the mRNA and conformational changes in the ribosome. The protein is Elongation factor G 1 of Geobacter sulfurreducens (strain ATCC 51573 / DSM 12127 / PCA).